Here is a 188-residue protein sequence, read N- to C-terminus: Large ribosomal subunit protein eL18 (188 aa).

Residue Lys-119 forms a Glycyl lysine isopeptide (Lys-Gly) (interchain with G-Cter in SUMO2) linkage. Position 130 is a phosphoserine (Ser-130). The interval 150 to 188 is disordered; that stretch reads RHFGKAPGTPHSHTKPYVRSKGRKFERARGRRASRGYKN. Residue Thr-158 is modified to Phosphothreonine. 2 stretches are compositionally biased toward basic residues: residues 161-171 and 178-188; these read SHTKPYVRSKG and RGRRASRGYKN. Residue Lys-164 forms a Glycyl lysine isopeptide (Lys-Gly) (interchain with G-Cter in SUMO2) linkage.

The protein belongs to the eukaryotic ribosomal protein eL18 family. As to quaternary structure, component of the large ribosomal subunit.

It is found in the cytoplasm. The protein localises to the cytosol. The protein resides in the rough endoplasmic reticulum. Its function is as follows. Component of the large ribosomal subunit. The ribosome is a large ribonucleoprotein complex responsible for the synthesis of proteins in the cell. The protein is Large ribosomal subunit protein eL18 (Rpl18) of Rattus norvegicus (Rat).